The primary structure comprises 295 residues: Sulfotransferase 1A2 (295 aa).

Position 48–53 (Lys-48–Trp-53) interacts with 3'-phosphoadenylyl sulfate. Lys-106–His-108 is a binding site for substrate. The active-site Proton acceptor is His-108. Residues Arg-130, Ser-138, Tyr-193, Thr-227–Met-232, and Phe-255–Gly-259 contribute to the 3'-phosphoadenylyl sulfate site.

Belongs to the sulfotransferase 1 family. Homodimer.

It is found in the cytoplasm. It catalyses the reaction a phenol + 3'-phosphoadenylyl sulfate = an aryl sulfate + adenosine 3',5'-bisphosphate + H(+). Functionally, sulfotransferase that utilizes 3'-phospho-5'-adenylyl sulfate (PAPS) as sulfonate donor to catalyze the sulfate conjugation of catecholamines, phenolic drugs and neurotransmitters. Is also responsible for the sulfonation and activation of minoxidil. Mediates the metabolic activation of carcinogenic N-hydroxyarylamines to DNA binding products and could so participate as modulating factor of cancer risk. This chain is Sulfotransferase 1A2 (SULT1A2), found in Homo sapiens (Human).